Reading from the N-terminus, the 285-residue chain is MSDDFLWFEGIAFPTMGFRSETLRKVRDEFVIRDEDVIILTYPKSGTNWLAEILCLMHSKGDAKWIQSVPIWERSPWVESEIGYTALSETESPRLFSSHLPIQLFPKSFFSSKAKVIYLMRNPRDVLVSGYFFWKNMKFIKKPKSWEEYFEWFCQGTVLYGSWFDHIHGWMPMREEKNFLLLSYEELKQDTGRTIEKICQFLGKTLEPEELNLILKNSSFQSMKENKMSNYSLLSVDYVVDKAQLLRKGVSGDWKNHFTVAQAEDFDKLFQEKMADLPRELFPWE.

3'-phosphoadenylyl sulfate-binding residues include Lys-44, Ser-45, Gly-46, Thr-47, Asn-48, and Trp-49. Residue His-99 is the Proton acceptor of the active site. Residues Arg-121, Ser-129, Tyr-184, Ser-218, Met-223, Arg-247, Lys-248, and Gly-249 each contribute to the 3'-phosphoadenylyl sulfate site. At Ser-251 the chain carries Phosphoserine.

Belongs to the sulfotransferase 1 family. In terms of assembly, homodimer. In terms of processing, the N-terminus is blocked. Liver, adrenal and at lower level in the kidney. Is present in human fetus in higher level in the adrenal than the liver and the kidney.

It is found in the cytoplasm. It catalyses the reaction an alcohol + 3'-phosphoadenylyl sulfate = an alkyl sulfate + adenosine 3',5'-bisphosphate + H(+). It carries out the reaction (24S)-hydroxycholesterol + 3'-phosphoadenylyl sulfate = (24S)-hydroxycholesterol 24-sulfate + adenosine 3',5'-bisphosphate + H(+). The catalysed reaction is (24S)-hydroxycholesterol + 3'-phosphoadenylyl sulfate = (24S)-hydroxycholesterol 3-sulfate + adenosine 3',5'-bisphosphate + H(+). The enzyme catalyses (24S)-hydroxycholesterol 24-sulfate + 3'-phosphoadenylyl sulfate = (24S)-hydroxycholesterol 3,24-disulfate + adenosine 3',5'-bisphosphate + H(+). It catalyses the reaction 3beta-hydroxyandrost-5-en-17-one + 3'-phosphoadenylyl sulfate = dehydroepiandrosterone 3-sulfate + adenosine 3',5'-bisphosphate + H(+). It carries out the reaction pregnenolone + 3'-phosphoadenylyl sulfate = pregnenolone sulfate + adenosine 3',5'-bisphosphate + H(+). The catalysed reaction is androsterone + 3'-phosphoadenylyl sulfate = androsterone 3alpha-sulfate + adenosine 3',5'-bisphosphate + H(+). The enzyme catalyses taurolithocholate + 3'-phosphoadenylyl sulfate = taurolithocholate 3-sulfate + adenosine 3',5'-bisphosphate + H(+). It catalyses the reaction lithocholate + 3'-phosphoadenylyl sulfate = lithocholate sulfate + adenosine 3',5'-bisphosphate + H(+). Its activity is regulated as follows. Subject to substrate inhibition. Alternate orientations for binding of steroid substrates to SULT2A1 may play a role in substrate inhibition. Sulfotransferase that utilizes 3'-phospho-5'-adenylyl sulfate (PAPS) as sulfonate donor to catalyze the sulfonation of steroids and bile acids in the liver and adrenal glands. Mediates the sulfation of a wide range of steroids and sterols, including pregnenolone, androsterone, DHEA, bile acids, cholesterol and as well many xenobiotics that contain alcohol and phenol functional groups. Sulfonation increases the water solubility of most compounds, and therefore their renal excretion, but it can also result in bioactivation to form active metabolites. Plays an important role in maintening steroid and lipid homeostasis. Plays a key role in bile acid metabolism. In addition, catalyzes the metabolic activation of potent carcinogenic polycyclic arylmethanols. The sequence is that of Sulfotransferase 2A1 (SULT2A1) from Homo sapiens (Human).